A 380-amino-acid chain; its full sequence is DNA replication and repair protein RecF (380 aa).

30–37 (GNNAQGKS) contributes to the ATP binding site.

Belongs to the RecF family.

The protein resides in the cytoplasm. Functionally, the RecF protein is involved in DNA metabolism; it is required for DNA replication and normal SOS inducibility. RecF binds preferentially to single-stranded, linear DNA. It also seems to bind ATP. This Crocosphaera subtropica (strain ATCC 51142 / BH68) (Cyanothece sp. (strain ATCC 51142)) protein is DNA replication and repair protein RecF.